Consider the following 440-residue polypeptide: Thymidine phosphorylase (440 aa).

The protein belongs to the thymidine/pyrimidine-nucleoside phosphorylase family. Homodimer.

The enzyme catalyses thymidine + phosphate = 2-deoxy-alpha-D-ribose 1-phosphate + thymine. The protein operates within pyrimidine metabolism; dTMP biosynthesis via salvage pathway; dTMP from thymine: step 1/2. In terms of biological role, the enzymes which catalyze the reversible phosphorolysis of pyrimidine nucleosides are involved in the degradation of these compounds and in their utilization as carbon and energy sources, or in the rescue of pyrimidine bases for nucleotide synthesis. The polypeptide is Thymidine phosphorylase (Burkholderia pseudomallei (strain 1106a)).